Here is a 476-residue protein sequence, read N- to C-terminus: UDP-N-acetylmuramate--L-alanine ligase (476 aa).

125–131 lines the ATP pocket; it reads GTHGKTT.

It belongs to the MurCDEF family.

The protein localises to the cytoplasm. The catalysed reaction is UDP-N-acetyl-alpha-D-muramate + L-alanine + ATP = UDP-N-acetyl-alpha-D-muramoyl-L-alanine + ADP + phosphate + H(+). The protein operates within cell wall biogenesis; peptidoglycan biosynthesis. In terms of biological role, cell wall formation. The polypeptide is UDP-N-acetylmuramate--L-alanine ligase (Histophilus somni (strain 129Pt) (Haemophilus somnus)).